A 79-amino-acid polypeptide reads, in one-letter code: Reactive oxygen species modulator 1 (79 aa).

The chain crosses the membrane as a helical span at residues F23–L43. The tract at residues C42–M60 is sufficient for antibacterial activity.

It belongs to the MGR2 family.

It localises to the mitochondrion inner membrane. Has antibacterial activity against a variety of bacteria including S.aureus, P.aeruginosa and M.tuberculosis. Acts by inducing bacterial membrane breakage. Functionally, induces production of reactive oxygen species (ROS) which are necessary for cell proliferation. May play a role in inducing oxidative DNA damage and replicative senescence. May play a role in the coordination of mitochondrial morphology and cell proliferation. The chain is Reactive oxygen species modulator 1 (romo1) from Xenopus tropicalis (Western clawed frog).